Reading from the N-terminus, the 192-residue chain is Ion-translocating oxidoreductase complex subunit A (192 aa).

6 helical membrane passes run 5-25 (ILLI…FLGL), 39-59 (IGMS…AYLI), 63-83 (ILTP…VIAV), 102-122 (LLGI…VALL), 134-154 (VIYG…FAAL), and 171-191 (SIAL…TGLV).

The protein belongs to the NqrDE/RnfAE family. In terms of assembly, the complex is composed of six subunits: RnfA, RnfB, RnfC, RnfD, RnfE and RnfG.

It localises to the cell inner membrane. In terms of biological role, part of a membrane-bound complex that couples electron transfer with translocation of ions across the membrane. This is Ion-translocating oxidoreductase complex subunit A from Pasteurella multocida (strain Pm70).